Here is a 164-residue protein sequence, read N- to C-terminus: MYRVRVFGDPVLRKRAKPVTKFDEALKRTIERMIETMYHYDGVGLAAPQVGISQRFFVMDVGNGPVAVINPEILEASPETEIAEEGCLSFPEIFVEIERSKRVKVRYQNVRGEFVEEELEGYPARVFQHEFDHLNGVLIIDRIKPAKRLLLRKRLMDIAKSARG.

Residues Cys87 and His129 each contribute to the Fe cation site. The active site involves Glu130. His133 serves as a coordination point for Fe cation.

Belongs to the polypeptide deformylase family. Fe(2+) is required as a cofactor.

The enzyme catalyses N-terminal N-formyl-L-methionyl-[peptide] + H2O = N-terminal L-methionyl-[peptide] + formate. Functionally, removes the formyl group from the N-terminal Met of newly synthesized proteins. Requires at least a dipeptide for an efficient rate of reaction. N-terminal L-methionine is a prerequisite for activity but the enzyme has broad specificity at other positions. The protein is Peptide deformylase of Thermotoga neapolitana (strain ATCC 49049 / DSM 4359 / NBRC 107923 / NS-E).